A 472-amino-acid polypeptide reads, in one-letter code: Ribosomal protein uS12 methylthiotransferase RimO (472 aa).

Residues 33–143 enclose the MTTase N-terminal domain; it reads NRIGFVSLGC…VLKHVHKYVP (111 aa). Cysteine 42, cysteine 78, cysteine 107, cysteine 175, cysteine 179, and cysteine 182 together coordinate [4Fe-4S] cluster. The Radical SAM core domain maps to 161 to 398; the sequence is LTPKHYAYLK…MEVQAEISAE (238 aa). One can recognise a TRAM domain in the interval 401–467; it reads ARFVGRTLDI…EHDLWAEVVD (67 aa).

Belongs to the methylthiotransferase family. RimO subfamily. The cofactor is [4Fe-4S] cluster.

Its subcellular location is the cytoplasm. It carries out the reaction L-aspartate(89)-[ribosomal protein uS12]-hydrogen + (sulfur carrier)-SH + AH2 + 2 S-adenosyl-L-methionine = 3-methylsulfanyl-L-aspartate(89)-[ribosomal protein uS12]-hydrogen + (sulfur carrier)-H + 5'-deoxyadenosine + L-methionine + A + S-adenosyl-L-homocysteine + 2 H(+). In terms of biological role, catalyzes the methylthiolation of an aspartic acid residue of ribosomal protein uS12. In Shewanella baltica (strain OS155 / ATCC BAA-1091), this protein is Ribosomal protein uS12 methylthiotransferase RimO.